A 139-amino-acid chain; its full sequence is Early placenta insulin-like peptide (139 aa).

The N-terminal stretch at 1-25 (MASLFRSYLPAIWLLLSQLLRESLA) is a signal peptide. 3 cysteine pairs are disulfide-bonded: Cys31–Cys125, Cys43–Cys138, and Cys124–Cys129. Residues 59–114 (LESGRPKEMVSTSNNKDGQALGTTSEFIPNLSPELKKPLSEGQPSLKKIILSRKKR) constitute a propeptide, c peptide.

The protein belongs to the insulin family. Expressed in placenta, uterus and in fetal perichondrium. Expression levels were increased in both early placentas and molar pregnancies and were reduced in choriocarcinoma cells.

Its subcellular location is the secreted. Functionally, may play an important role in trophoblast development and in the regulation of bone formation. In Homo sapiens (Human), this protein is Early placenta insulin-like peptide (INSL4).